The sequence spans 382 residues: tRNA-specific 2-thiouridylase MnmA (382 aa).

ATP is bound by residues 18–25 (AMSGGVDS) and L44. The Nucleophile role is filled by C112. C112 and C209 are joined by a disulfide. G136 contacts ATP. The interval 159 to 161 (RDQ) is interaction with tRNA. The Cysteine persulfide intermediate role is filled by C209.

This sequence belongs to the MnmA/TRMU family.

Its subcellular location is the cytoplasm. The enzyme catalyses S-sulfanyl-L-cysteinyl-[protein] + uridine(34) in tRNA + AH2 + ATP = 2-thiouridine(34) in tRNA + L-cysteinyl-[protein] + A + AMP + diphosphate + H(+). Catalyzes the 2-thiolation of uridine at the wobble position (U34) of tRNA, leading to the formation of s(2)U34. In Methylobacterium nodulans (strain LMG 21967 / CNCM I-2342 / ORS 2060), this protein is tRNA-specific 2-thiouridylase MnmA.